The chain runs to 40 residues: Dolichyl-diphosphooligosaccharide--protein glycosyltransferase subunit 4 (40 aa).

The Lumenal portion of the chain corresponds to 1–4 (MITD). Residues 5–25 (VQLAIFSNVLGVFLFLLVVAY) traverse the membrane as a helical segment. Topologically, residues 26-40 (HYINANTGKPIPKAK) are cytoplasmic.

This sequence belongs to the OST4 family. In terms of assembly, component of the oligosaccharyltransferase (OST) complex.

The protein resides in the endoplasmic reticulum membrane. Its function is as follows. Subunit of the oligosaccharyl transferase (OST) complex that catalyzes the initial transfer of a defined glycan (Glc(3)Man(9)GlcNAc(2) in eukaryotes) from the lipid carrier dolichol-pyrophosphate to an asparagine residue within an Asn-X-Ser/Thr consensus motif in nascent polypeptide chains, the first step in protein N-glycosylation. N-glycosylation occurs cotranslationally and the complex associates with the Sec61 complex at the channel-forming translocon complex that mediates protein translocation across the endoplasmic reticulum (ER). All subunits are required for a maximal enzyme activity. The polypeptide is Dolichyl-diphosphooligosaccharide--protein glycosyltransferase subunit 4 (Drosophila ananassae (Fruit fly)).